The chain runs to 505 residues: Lysine--tRNA ligase (505 aa).

Mg(2+) is bound by residues E415 and E422.

It belongs to the class-II aminoacyl-tRNA synthetase family. As to quaternary structure, homodimer. It depends on Mg(2+) as a cofactor.

Its subcellular location is the cytoplasm. It catalyses the reaction tRNA(Lys) + L-lysine + ATP = L-lysyl-tRNA(Lys) + AMP + diphosphate. The protein is Lysine--tRNA ligase of Cronobacter sakazakii (strain ATCC BAA-894) (Enterobacter sakazakii).